Here is a 1901-residue protein sequence, read N- to C-terminus: MIFQSFLLGNLVSLCMKIINSVVVVGLYYGFLTTFSIGPSYLFLLRALVMEEGTEKKVSATTGFITGQLMMFISIYYAPLHLALGRPHTITVLALPYLLFHFFWNNHKHFFDYGSTTRNSMRNLSIQCVFLNNLIFQLFNHFILPSSMLARLVNIYLFRCNSKILFVTSGFVGWLIGHILFMKWLGLVLVWIRQNHSIRSNKYIRSNKYLVLELRNSMARIFSILLFITCVYYLGRIPSPILTKKLKEASKTEERVESEEERDVEIETASEMKGTKQEQEGSTEEDPYPSPSLFSEERWDPDKIDETEEIRVNGKDKIKDKFHSHLTETGYNNINTSNSPIYDYEDSYLNNNNTGNTEIFKLQLLDKKNENKDLFWFQQPLVSLLFDYNRWNRPFRYIKNNRFEQAIRTEMSQYFFNTCKSDGKQRISFTYPPSLSTFWKMIKRRIPLLSLQKTLPNELDNQWISTNKEKSNNLNKEFLNRLEVLDKESFSLDILETRTRLCNDDTKKEYVPKMYDPLLNGPYRGTIKKKFSPSIINNTSLENLKERVRINRIHTIFLPNTDYQELEQKVDTVAKKPLSTEIDEFLTLINEFGNEPKSSLNLKDLSLFSDQEQGRVNSEKRTKFVKFVFNAIAPNGTTSEKKSIGIKEISKKIPRWSHKLITELEQQSGDYQEGVPLDHQIRSRKAKRVVIFTANNQNNDPDTKDTDTADQDQTKEVALIRYSQQPDFRRGIIKGSMRAQRRKTVIWKLFQANVHSPLFLDRITPPFLFSFDISGLIKPIFRNWSGKEGEFKILESREEQTKREEKKEKDKKGENKRKEKARIEIAEAWDTIPFAQIIRGYMLITQSILRKYIVLPSLIIAKNLGRMLVLQLPEWSEDLQEWNREMHIKCTYNGVQLSETEFPKNWLKDGIQIKILFPFCLKPWHISKLYSSRGELMKKKKQKDDFCFLTVWGMEAELPFGSPRKRPSFFEPIFKELEKKIGKFKKKYFITLKVFKGKIKLFRRISKETKKWLIKSSLFIKKMKKELSKVNPIVLFRLKEIDESNETKKEKDSLMSNQIINESFSQIESGNWPNSSLIESKMKDLTDRTSTIKNQIERITKEKKKVTPEIDISPNKTNNIKKFESPKKIFQILKRRNTRLIWKFHYFLKLFIQRLYIDLFLSIINIPRINTQLFLESTNKLIDKYISNNEINQEKINNQKKIHFISTIKKSLYNISKKNSHIFFDLSYLSQAYVFYKLSQPQVINLSKLRSVLQYNRTSFFLKTKIKDYFRTLGIFHSELKHKKLQSYRINQWKNWLRRHYQYDLSQIRWSRLMPQKWRNRVNQGCMAQNRNLNKWNSYEKDQLIHYKKENDSELYSLANQKDNFQKCYRYDLLAYKSINYEKKNDSFISRLPFQVNKNLEISSNSNTSKHNLFDMLGNLHINNYLRKGNILYIERNLDRKYFDWKIIHFSLRQKEDIEAWVKIDTNSNPNTKIGINNYQIIDKIDKKGFFYLTIHQNPENNQKNSKKAFFDWMGMNEKILNRPILNLEFWFFPEFVPLYNVYKIKPWIIPSKLLLLNLNTNENVSQNKNINKNQKQNFFLRSNKKIKNRIQEAKEPASQGEKERGSDIENKGNLGPVLSKHQNALKKDYAESDTKKGKKKKQYKSNTEAELDLFLKRYLLFQLRWNDALNQRMIENIKVYCLLLRLINPSKIAISSIQRREMSLDIMLIQKNLTLTELMKKGILIIEPIRLSVKNNGQFIMYQTIGISLVHKSKHQTNQRYPEQRYVDKKNFDEFILQPQTQRINTDKNHFDLLVPENILWSRRRRELRIRSLFNSLNWNGIDRNSVFCNENNVKNWSQFLDERKPLYKEKNELIKLKFFLWPNYRLEDLACMNRYWFDTNNGSRFSILRIHMYPQLKIN.

6 helical membrane-spanning segments follow: residues 18-38, 64-84, 87-107, 124-144, 172-192, and 221-241; these read IINS…FSIG, FITG…HLAL, PHTI…WNNH, LSIQ…HFIL, VGWL…LVWI, and IFSI…PSPI. Disordered regions lie at residues 248–299, 797–817, and 1591–1618; these read EASK…EERW, REEQ…ENKR, and IQEA…LGPV. A compositionally biased stretch (acidic residues) spans 256-268; it reads VESEEERDVEIET. A compositionally biased stretch (basic and acidic residues) spans 1591–1611; it reads IQEAKEPASQGEKERGSDIEN.

The protein belongs to the TIC214 family. As to quaternary structure, part of the Tic complex.

The protein localises to the plastid. It is found in the chloroplast inner membrane. Functionally, involved in protein precursor import into chloroplasts. May be part of an intermediate translocation complex acting as a protein-conducting channel at the inner envelope. The polypeptide is Protein TIC 214 (Nicotiana sylvestris (Wood tobacco)).